We begin with the raw amino-acid sequence, 516 residues long: Amino-acid permease BAT1 (516 aa).

12 consecutive transmembrane segments (helical) span residues 33–53, 70–90, 113–133, 164–184, 189–209, 232–252, 275–295, 328–348, 383–403, 406–426, 452–472, and 483–503; these read LSVF…TGIT, YGWF…AEIC, PLAS…VTAS, VVIG…SLPI, FIGQ…MILI, LGIT…QYTI, GIIS…LGIS, FGSG…VFFC, VPIN…LTSL, IVAF…AYAI, VVGW…SLPV, and YTPV…LFSA.

It belongs to the amino acid-polyamine-organocation (APC) superfamily. Amino acid/choline transporter (ACT) (TC 2.A.3.4) family. In terms of tissue distribution, expressed in roots, rosette leaves, stems, cauline leaves, flowers and siliques.

It is found in the mitochondrion membrane. Functionally, may play a role in primary carbon metabolism and plant growth, by mediating the transport of GABA from the cytosol to mitochondria. When expressed in a heterologous system (yeast), imports Arg and Ala across the plasma membrane and exports Lys and Glu, but does not transport proline. The protein is Amino-acid permease BAT1 (BAT1) of Arabidopsis thaliana (Mouse-ear cress).